The sequence spans 212 residues: Peptide methionine sulfoxide reductase MsrA (212 aa).

Cysteine 52 is a catalytic residue.

Belongs to the MsrA Met sulfoxide reductase family.

It carries out the reaction L-methionyl-[protein] + [thioredoxin]-disulfide + H2O = L-methionyl-(S)-S-oxide-[protein] + [thioredoxin]-dithiol. The catalysed reaction is [thioredoxin]-disulfide + L-methionine + H2O = L-methionine (S)-S-oxide + [thioredoxin]-dithiol. Has an important function as a repair enzyme for proteins that have been inactivated by oxidation. Catalyzes the reversible oxidation-reduction of methionine sulfoxide in proteins to methionine. This chain is Peptide methionine sulfoxide reductase MsrA, found in Shigella boydii serotype 18 (strain CDC 3083-94 / BS512).